We begin with the raw amino-acid sequence, 208 residues long: MTNVLFIKANGLPAERSVSVALYEIFLAEYKKSHPDDNVTELDLFEADLPYYDVTMMSGLHKEVAGETLTPEEKRLADIANGYLDQFLAADKIVMAFPLWNFSIPAQFLTYLFYLNQAGKTFKYTANGPIGLVTDKKIALLNARGGIYSDGPLQSFEMSLNYVKNVLAHFGISEPEMVIVEGHNAKPDQAKDIISAGAKEAAELAKIF.

17 to 19 (SVS) contributes to the FMN binding site.

It belongs to the azoreductase type 1 family. In terms of assembly, homodimer. Requires FMN as cofactor.

It carries out the reaction 2 a quinone + NADH + H(+) = 2 a 1,4-benzosemiquinone + NAD(+). The enzyme catalyses N,N-dimethyl-1,4-phenylenediamine + anthranilate + 2 NAD(+) = 2-(4-dimethylaminophenyl)diazenylbenzoate + 2 NADH + 2 H(+). In terms of biological role, quinone reductase that provides resistance to thiol-specific stress caused by electrophilic quinones. Its function is as follows. Also exhibits azoreductase activity. Catalyzes the reductive cleavage of the azo bond in aromatic azo compounds to the corresponding amines. This Listeria innocua serovar 6a (strain ATCC BAA-680 / CLIP 11262) protein is FMN-dependent NADH:quinone oxidoreductase 1.